Consider the following 347-residue polypeptide: DNA primase small subunit PriS (347 aa).

Catalysis depends on residues Asp-95 and Asp-97. Zn(2+) is bound by residues Cys-106, His-108, Cys-114, and Cys-117. The short motif at 106 to 117 (CNHEPGTVCPIC) is the Zinc knuckle motif element. Asp-280 is a catalytic residue.

The protein belongs to the eukaryotic-type primase small subunit family. Heterodimer of a small subunit (PriS) and a large subunit (PriL). Both participate in formation of the active center, but the ATP-binding site is exclusively located on the small subunit. Mg(2+) is required as a cofactor. Mn(2+) serves as cofactor.

In terms of biological role, catalytic subunit of DNA primase, an RNA polymerase that catalyzes the synthesis of short RNA molecules used as primers for DNA polymerase during DNA replication. The small subunit contains the primase catalytic core and has DNA synthesis activity on its own. Binding to the large subunit stabilizes and modulates the activity, increasing the rate of DNA synthesis while decreasing the length of the DNA fragments, and conferring RNA synthesis capability. The DNA polymerase activity may enable DNA primase to also catalyze primer extension after primer synthesis. May also play a role in DNA repair. The protein is DNA primase small subunit PriS of Pyrococcus furiosus (strain ATCC 43587 / DSM 3638 / JCM 8422 / Vc1).